The following is a 304-amino-acid chain: Large ribosomal subunit protein uL18 (304 aa).

It belongs to the universal ribosomal protein uL18 family. In terms of assembly, component of a hexameric 5S RNP precursor complex, composed of 5S RNA, RRS1, RPF2, RPL5, RPL11 and SYO1; this complex acts as a precursor for ribosome assembly.

Its subcellular location is the cytoplasm. Its function is as follows. Component of the ribosome, a large ribonucleoprotein complex responsible for the synthesis of proteins in the cell. The small ribosomal subunit (SSU) binds messenger RNAs (mRNAs) and translates the encoded message by selecting cognate aminoacyl-transfer RNA (tRNA) molecules. The large subunit (LSU) contains the ribosomal catalytic site termed the peptidyl transferase center (PTC), which catalyzes the formation of peptide bonds, thereby polymerizing the amino acids delivered by tRNAs into a polypeptide chain. The nascent polypeptides leave the ribosome through a tunnel in the LSU and interact with protein factors that function in enzymatic processing, targeting, and the membrane insertion of nascent chains at the exit of the ribosomal tunnel. This Chaetomium thermophilum (strain DSM 1495 / CBS 144.50 / IMI 039719) (Thermochaetoides thermophila) protein is Large ribosomal subunit protein uL18.